The following is a 322-amino-acid chain: Arginase (322 aa).

Histidine 113, aspartate 141, histidine 143, and aspartate 145 together coordinate Mn(2+). Substrate is bound by residues 143–147, 154–156, and aspartate 200; these read HADIN and SGN. Aspartate 247 and aspartate 249 together coordinate Mn(2+). Residues threonine 261 and glutamate 292 each contribute to the substrate site.

It belongs to the arginase family. As to quaternary structure, homotrimer. Requires Mn(2+) as cofactor.

It carries out the reaction L-arginine + H2O = urea + L-ornithine. The protein operates within nitrogen metabolism; urea cycle; L-ornithine and urea from L-arginine: step 1/1. This is Arginase (ARG) from Coccidioides immitis (strain RS) (Valley fever fungus).